Consider the following 501-residue polypeptide: ATP synthase subunit alpha (501 aa).

169-176 contributes to the ATP binding site; sequence GDRQTGKT.

Belongs to the ATPase alpha/beta chains family. As to quaternary structure, F-type ATPases have 2 components, CF(1) - the catalytic core - and CF(0) - the membrane proton channel. CF(1) has five subunits: alpha(3), beta(3), gamma(1), delta(1), epsilon(1). CF(0) has three main subunits: a(1), b(2) and c(9-12). The alpha and beta chains form an alternating ring which encloses part of the gamma chain. CF(1) is attached to CF(0) by a central stalk formed by the gamma and epsilon chains, while a peripheral stalk is formed by the delta and b chains.

It localises to the cell inner membrane. It carries out the reaction ATP + H2O + 4 H(+)(in) = ADP + phosphate + 5 H(+)(out). Produces ATP from ADP in the presence of a proton gradient across the membrane. The alpha chain is a regulatory subunit. This Campylobacter jejuni subsp. jejuni serotype O:6 (strain 81116 / NCTC 11828) protein is ATP synthase subunit alpha.